Here is a 150-residue protein sequence, read N- to C-terminus: Protein A151R (150 aa).

This sequence belongs to the asfivirus A151R family. As to quaternary structure, monomer. Homodimer. Interacts with protein B119L. Interacts with membrane protein E248R. Zn(2+) is required as a cofactor.

In terms of biological role, may participate in a redox cascade for the formation of disulfide bonds in viral proteins. In African swine fever virus (isolate Tick/Malawi/Lil 20-1/1983) (ASFV), this protein is Protein A151R.